The chain runs to 188 residues: Elongation factor P (188 aa).

Lys34 carries the post-translational modification N6-(3,6-diaminohexanoyl)-5-hydroxylysine.

This sequence belongs to the elongation factor P family. May be beta-lysylated on the epsilon-amino group of Lys-34 by the combined action of EpmA and EpmB, and then hydroxylated on the C5 position of the same residue by EpmC (if this protein is present). Lysylation is critical for the stimulatory effect of EF-P on peptide-bond formation. The lysylation moiety may extend toward the peptidyltransferase center and stabilize the terminal 3-CCA end of the tRNA. Hydroxylation of the C5 position on Lys-34 may allow additional potential stabilizing hydrogen-bond interactions with the P-tRNA.

Its subcellular location is the cytoplasm. The protein operates within protein biosynthesis; polypeptide chain elongation. Involved in peptide bond synthesis. Alleviates ribosome stalling that occurs when 3 or more consecutive Pro residues or the sequence PPG is present in a protein, possibly by augmenting the peptidyl transferase activity of the ribosome. Modification of Lys-34 is required for alleviation. This is Elongation factor P from Sodalis glossinidius (strain morsitans).